The following is a 999-amino-acid chain: Transcription-repair-coupling factor (999 aa).

Residues 499 to 656 enclose the Helicase ATP-binding domain; the sequence is DLSSHRVMDR…LSQIKGISSL (158 aa). Residue 512 to 519 coordinates ATP; sequence GDVGFGKT. Residues 609–612 carry the DEEH box motif; sequence DEEH. A Helicase C-terminal domain is found at 677–833; it reads LLKEIIYREL…SVAYHDLEIR (157 aa).

This sequence in the N-terminal section; belongs to the UvrB family. It in the C-terminal section; belongs to the helicase family. RecG subfamily.

The protein resides in the cytoplasm. In terms of biological role, couples transcription and DNA repair by recognizing RNA polymerase (RNAP) stalled at DNA lesions. Mediates ATP-dependent release of RNAP and its truncated transcript from the DNA, and recruitment of nucleotide excision repair machinery to the damaged site. This chain is Transcription-repair-coupling factor, found in Helicobacter pylori (strain ATCC 700392 / 26695) (Campylobacter pylori).